A 27-amino-acid chain; its full sequence is Phospholipase A2 2 (27 aa).

The disordered stretch occupies residues 1–27 (FMKVIDPGTKWCGPGNKAADDTDNGKN). Residues W11, G13, and G15 each contribute to the Ca(2+) site. Over residues 18 to 27 (AADDTDNGKN) the composition is skewed to basic and acidic residues.

The protein belongs to the phospholipase A2 family. The cofactor is Ca(2+). Expressed by the venom gland.

Its subcellular location is the secreted. It carries out the reaction a 1,2-diacyl-sn-glycero-3-phosphocholine + H2O = a 1-acyl-sn-glycero-3-phosphocholine + a fatty acid + H(+). Its function is as follows. PLA2 catalyzes the calcium-dependent hydrolysis of the 2-acyl groups in 3-sn-phosphoglycerides. The chain is Phospholipase A2 2 from Opisthacanthus cayaporum (South American scorpion).